The following is a 229-amino-acid chain: Endonuclease V (229 aa).

Mg(2+)-binding residues include aspartate 43 and aspartate 111.

Belongs to the endonuclease V family. The cofactor is Mg(2+).

The protein localises to the cytoplasm. The enzyme catalyses Endonucleolytic cleavage at apurinic or apyrimidinic sites to products with a 5'-phosphate.. Functionally, DNA repair enzyme involved in the repair of deaminated bases. Selectively cleaves double-stranded DNA at the second phosphodiester bond 3' to a deoxyinosine leaving behind the intact lesion on the nicked DNA. This Rippkaea orientalis (strain PCC 8801 / RF-1) (Cyanothece sp. (strain PCC 8801)) protein is Endonuclease V.